The sequence spans 232 residues: Small ribosomal subunit protein uS3 (232 aa).

The region spanning 39 to 107 (VRQFLTKELS…PAQINIAEVR (69 aa)) is the KH type-2 domain.

This sequence belongs to the universal ribosomal protein uS3 family. Part of the 30S ribosomal subunit. Forms a tight complex with proteins S10 and S14.

Its function is as follows. Binds the lower part of the 30S subunit head. Binds mRNA in the 70S ribosome, positioning it for translation. The protein is Small ribosomal subunit protein uS3 of Sodalis glossinidius (strain morsitans).